The primary structure comprises 1148 residues: Envelopment polyprotein (1148 aa).

An N-terminal signal peptide occupies residues 1–23 (MGELSPVCLCLLLQGLLLCNTGA). Residues 24-496 (ARNLNELKME…PGLHGWATML (473 aa)) are Lumenal-facing. Cystine bridges form between C34–C159, C68–C165, C117–C136, C141–C146, C183–C193, and C218–C257. N142 carries an N-linked (GlcNAc...) asparagine; by host glycan. Residue N357 is glycosylated (N-linked (GlcNAc...) asparagine; by host). Disulfide bonds link C386–C445, C390–C399, C415–C434, and C462–C485. N-linked (GlcNAc...) asparagine; by host glycosylation occurs at N409. A helical transmembrane segment spans residues 497 to 517 (LLLTFCFGWVLIPTITMILLK). At 518 to 637 (ILIAFAYLCS…LSLFRYRSRF (120 aa)) the chain is on the cytoplasmic side. The tract at residues 526-543 (CSKYNTDSKFRILIEKVK) is binding to the ribonucleoprotein. 2 CCHC-type zinc fingers span residues 555 to 575 (CEVCQYECETAKELESHRKSC) and 580 to 601 (CPYCLNPSEATTSALQAHFKVC). Binding to the ribonucleoprotein regions lie at residues 598–615 (FKVCKLTSRFQENLRKSL), 602–613 (KLTSRFQENLRK), and 621–635 (MQGCYRTLSLFRYRS). Residues 621–644 (MQGCYRTLSLFRYRSRFFVGLVWC) enclose the ITAM domain. Positions 625-628 (YRTL) match the YxxL motif. Residues 638-658 (FVGLVWCVLLVLELIVWAASA) traverse the membrane as a helical segment. Residues 659-1115 (ETQNLNAGWT…WILGVLNGNW (457 aa)) are Lumenal-facing. 8 cysteine pairs are disulfide-bonded: C745/C780, C749/C787, C761/C894, C775/C905, C790/C913, C816/C825, C833/C842, and C873/C877. A fusion loop region spans residues 767–787 (YEYETGWGCNPPDCPGVGTGC). N937 carries an N-linked (GlcNAc...) asparagine; by host glycan. Intrachain disulfides connect C979–C1009, C1002–C1054, C1019–C1024, C1055–C1060, and C1094–C1098. A helical transmembrane segment spans residues 1116–1136 (MVVAVLVVLLILSILLFTLCC). 2 binding to the ribonucleoprotein regions span residues 1131–1143 (LFTLCCPRRPSYR) and 1131–1148 (LFTLCCPRRPSYRKEHKP). At 1137–1148 (PRRPSYRKEHKP) the chain is on the cytoplasmic side.

It belongs to the hantavirus envelope glycoprotein family. In terms of assembly, homodimer. Homotetramer; forms heterotetrameric Gn-Gc spikes in the pre-fusion conformation. Interacts (via C-terminus) with the nucleoprotein. Interacts with host TUFM; this interaction contributes to the virus-induced degradation of mitochondria by autophagy, which leads to degradation of host MAVS and inhibition of type I interferon (IFN) responses. Interacts with host MAP1LC3B; this interaction contributes to the virus-induced degradation of mitochondria by autophagy, which leads to degradation of host MAVS and inhibition of type I interferon (IFN) responses. Homodimer. Homotetramer; forms heterotetrameric Gn-Gc spikes in the pre-fusion conformation. Homotrimer; forms homotrimer in the post-fusion conformation at acidic pH. Interacts (via C-terminus) with the nucleoprotein. Post-translationally, envelope polyprotein precursor is quickly cleaved in vivo just after synthesis, presumably by host signal peptidase.

Its subcellular location is the virion membrane. The protein localises to the host cell surface. The protein resides in the host Golgi apparatus membrane. It is found in the host endoplasmic reticulum membrane. It localises to the host mitochondrion. Its function is as follows. Forms homotetramers with glycoprotein C at the surface of the virion. Attaches the virion to host cell receptors including integrin ITGAV/ITGB3. This attachment induces virion internalization predominantly through clathrin-dependent endocytosis. Mediates the assembly and budding of infectious virus particles through its interaction with the nucleocapsid protein and the viral genome. May dysregulate normal immune and endothelial cell responses through an ITAM motif. Translocates to mitochondria, binds to host TUFM and recruits MAP1LC3B. These interactions induce mitochondrial autophagy and therefore destruction of host MAVS leading to inhibition of type I interferon (IFN) responses. Concomitant breakdown of glycoprotein N is apparently prevented by the nucleoprotein that may inhibit Gn-stimulated autophagosome-lysosome fusion. Interacts with the viral genomic RNA. Functionally, forms homotetramers with glycoprotein N at the surface of the virion. Attaches the virion to host cell receptors including integrin ITGAV/ITGB3. This attachment induces virion internalization predominantly through clathrin-dependent endocytosis. Class II fusion protein that promotes fusion of viral membrane with host endosomal membrane after endocytosis of the virion. The protein is Envelopment polyprotein (GP) of Homo sapiens (Human).